The chain runs to 204 residues: Histone chaperone ASF1A (204 aa).

The interaction with histone H3, CHAF1B, and HIRA stretch occupies residues 1 to 156; sequence MAKVQVNNVV…TRFHINWEDN (156 aa). The short motif at 31–37 is the Required for interaction with HIRA element; the sequence is IEDLSED. Positions 155-204 are required for interaction with HIRA; it reads DNTEKLEDAESSNPNLQSLLSTDALPSASKGWSTSENSLNVMLESHMDCM. S192 is subject to Phosphoserine.

Belongs to the ASF1 family. Interacts with histone H3 (via C-terminus), including histone H3.1, H3.2 and H3.3, and histone H4; the interaction with H3 is direct. Probably interacts with the heterodimeric form of H3-H4 taking the place of the second dimer. Interacts with the CHAF1A, CHAF1B and RBBP4 subunits of the CAF-1 complex. Interacts with CABIN1, HAT1, HIRA, NASP, TAF1 and UBN1. Found in a soluble complex with NASP and histones H3 and H4; the interaction with NASP is probably indirect and mediated by H3-H4. Interacts with CDAN1. Found in a cytosolic complex with IPO4 and histones H3 and H4. Interacts with CREBBP. Post-translationally, phosphorylated by TLK1 and TLK2. Highly phosphorylated in S-phase and at lower levels in M-phase. TLK2-mediated phosphorylation at Ser-192 prevents proteasome-dependent degradation. Phosphorylation at Ser-192 by PRKDC in response to DNA damage promotes the histone chaperone activity and ability to replace histones at double-strand breaks (DSBs) at stalled or collapsed replication forks, leading to RAD51 recruitment.

It is found in the nucleus. Its subcellular location is the chromosome. In terms of biological role, histone chaperone that facilitates histone deposition and histone exchange and removal during nucleosome assembly and disassembly. Cooperates with chromatin assembly factor 1 (CAF-1) to promote replication-dependent chromatin assembly and with HIRA to promote replication-independent chromatin assembly. Promotes homologous recombination-mediated repair of double-strand breaks (DSBs) at stalled or collapsed replication forks: acts by mediating histone replacement at DSBs, leading to recruitment of the MMS22L-TONSL complex and subsequent loading of RAD51. Also involved in the nuclear import of the histone H3-H4 dimer together with importin-4 (IPO4): specifically recognizes and binds newly synthesized histones with the monomethylation of H3 'Lys-9' and acetylation at 'Lys-14' (H3K9me1K14ac) marks, and diacetylation at 'Lys-5' and 'Lys-12' of H4 (H4K5K12ac) marks in the cytosol. Required for the formation of senescence-associated heterochromatin foci (SAHF) and efficient senescence-associated cell cycle exit. This is Histone chaperone ASF1A from Mus musculus (Mouse).